The chain runs to 326 residues: MNTTPGTVGSDPVILATAGYDHTVRFWQAHSGICTRTVQHQDSQVNALEITPDRSMIAAAGYQHIRMYDLNSNNPNPIISYDGVSKNIASVGFHEDGRWMYTGGEDCTARIWDLRSRNLQCQRIFQVNAPINCVCLHPNQAELIVGDQSGAIHIWDLKTDHNEQLIPEPESSITSAHIDPDASYMAAVNSAGNCYVWNLTGGIGDDVTQLIPKTKIPAHTRYALQCRFSPDSTLLATCSADQTCKIWRTSNFSLMTELSIKSSNPGESSRGWMWGCAFSGDSQYIVTASSDNLARLWCVETGEIKREYGGHQKAVVCLAFNDSVLG.

Residue M1 is modified to N-acetylmethionine. WD repeat units follow at residues 1 to 37 (MNTTPGTVGSDPVILATAGYDHTVRFWQAHSGICTRT), 40 to 80 (HQDS…PIIS), 83 to 122 (GVSKNIASVGFHEDGRWMYTGGEDCTARIWDLRSRNLQCQ), 126 to 165 (QVNAPINCVCLHPNQAELIVGDQSGAIHIWDLKTDHNEQL), and 168 to 207 (EPESSITSAHIDPDASYMAAVNSAGNCYVWNLTGGIGDDV). Position 51 is a phosphothreonine (T51). K86 participates in a covalent cross-link: Glycyl lysine isopeptide (Lys-Gly) (interchain with G-Cter in SUMO3). Glycyl lysine isopeptide (Lys-Gly) (interchain with G-Cter in SUMO3) cross-links involve residues K215, K245, and K261. The WD 6 repeat unit spans residues 218-257 (AHTRYALQCRFSPDSTLLATCSADQTCKIWRTSNFSLMTE). The stretch at 268-309 (SSRGWMWGCAFSGDSQYIVTASSDNLARLWCVETGEIKREYG) is one WD 7 repeat. K305 is covalently cross-linked (Glycyl lysine isopeptide (Lys-Gly) (interchain with G-Cter in SUMO3); alternate). Residues K305 and K313 each participate in a glycyl lysine isopeptide (Lys-Gly) (interchain with G-Cter in ubiquitin); alternate cross-link. K313 participates in a covalent cross-link: Glycyl lysine isopeptide (Lys-Gly) (interchain with G-Cter in SUMO1); alternate.

It belongs to the WD repeat LST8 family. In terms of assembly, part of the mechanistic target of rapamycin complex 1 (mTORC1) which contains MTOR, MLST8 and RPTOR. mTORC1 associates with AKT1S1/PRAS40, which inhibits its activity. mTORC1 binds to and is inhibited by FKBP12-rapamycin. Within mTORC1, interacts directly with MTOR and RPTOR. Component of the mechanistic target of rapamycin complex 2 (mTORC2), consisting in two heterotretramers composed of MTOR, MLST8, RICTOR and MAPKAP1/SIN1. Contrary to mTORC1, mTORC2 does not bind to and is not sensitive to FKBP12-rapamycin. mTORC1 and mTORC2 associate with DEPTOR, which regulates their activity. Interacts with RHEB. Interacts with MEAK7. Interacts with SIK3. Interacts with SLC38A7; this interaction promotes the recruitment of mTORC1 to the lysosome and its subsequent activation. Phosphorylation at Thr-51 by CDK1 promotes ubiquitination by the SCF(FBXW7) complex, followed by degradation. Post-translationally, ubiquitination by the SCF(FBXW7) and SCF(FBXW11) complexes following phosphorylation at Thr-51 by CDK1, leads to its degradation by the proteasome. Ubiquitination at Lys-305 and Lys-313 by TRAF2 via 'Lys-63'-linked polyubiquitin chains inhibits formation of the mTORC2 complex, while promoting formation of the mTORC1 complex: ubiquitination disrupts the interaction between MLST8 and MAPKAP1/SIN1 to favor mTORC1 assembly. Deubiquitination at Lys-305 and Lys-313 by OTUD7B promotes MLST8 interaction with MAPKAP1/SIN1, facilitating mTORC2 assembly. In terms of processing, sumoylation with SUMO1, SUMO2 and SUMO3 promotes assembly of both mTORC1 and mTORC2 complexes.

It is found in the lysosome membrane. It localises to the cytoplasm. Its function is as follows. Subunit of both mTORC1 and mTORC2, which regulates cell growth and survival in response to nutrient and hormonal signals. mTORC1 is activated in response to growth factors or amino acids. In response to nutrients, mTORC1 is recruited to the lysosome membrane and promotes protein, lipid and nucleotide synthesis by phosphorylating several substrates, such as ribosomal protein S6 kinase (RPS6KB1 and RPS6KB2) and EIF4EBP1 (4E-BP1). In the same time, it inhibits catabolic pathways by phosphorylating the autophagy initiation components ULK1 and ATG13, as well as transcription factor TFEB, a master regulators of lysosomal biogenesis and autophagy. The mTORC1 complex is inhibited in response to starvation and amino acid depletion. Within mTORC1, MLST8 interacts directly with MTOR and enhances its kinase activity. In nutrient-poor conditions, stabilizes the MTOR-RPTOR interaction and favors RPTOR-mediated inhibition of MTOR activity. As part of the mTORC2 complex, transduces signals from growth factors to pathways involved in proliferation, cytoskeletal organization, lipogenesis and anabolic output. mTORC2 is also activated by growth factors, but seems to be nutrient-insensitive. In response to growth factors, mTORC2 phosphorylates and activates AGC protein kinase family members, including AKT (AKT1, AKT2 and AKT3), PKC (PRKCA, PRKCB and PRKCE) and SGK1. mTORC2 functions upstream of Rho GTPases to regulate the actin cytoskeleton, probably by activating one or more Rho-type guanine nucleotide exchange factors. mTORC2 promotes the serum-induced formation of stress-fibers or F-actin. mTORC2 plays a critical role in AKT1 activation by mediating phosphorylation of different sites depending on the context, such as 'Thr-450', 'Ser-473', 'Ser-477' or 'Thr-479', facilitating the phosphorylation of the activation loop of AKT1 on 'Thr-308' by PDPK1/PDK1 which is a prerequisite for full activation. mTORC2 regulates the phosphorylation of SGK1 at 'Ser-422'. mTORC2 also modulates the phosphorylation of PRKCA on 'Ser-657'. Within mTORC2, MLST8 acts as a bridge between MAPKAP1/SIN1 and MTOR. This is Target of rapamycin complex subunit LST8 from Mus musculus (Mouse).